The sequence spans 157 residues: Crossover junction endodeoxyribonuclease RuvC (157 aa).

Active-site residues include aspartate 7, glutamate 67, and aspartate 140. Residues aspartate 7, glutamate 67, and aspartate 140 each coordinate Mg(2+).

Belongs to the RuvC family. Homodimer which binds Holliday junction (HJ) DNA. The HJ becomes 2-fold symmetrical on binding to RuvC with unstacked arms; it has a different conformation from HJ DNA in complex with RuvA. In the full resolvosome a probable DNA-RuvA(4)-RuvB(12)-RuvC(2) complex forms which resolves the HJ. Mg(2+) is required as a cofactor.

It is found in the cytoplasm. The enzyme catalyses Endonucleolytic cleavage at a junction such as a reciprocal single-stranded crossover between two homologous DNA duplexes (Holliday junction).. Its function is as follows. The RuvA-RuvB-RuvC complex processes Holliday junction (HJ) DNA during genetic recombination and DNA repair. Endonuclease that resolves HJ intermediates. Cleaves cruciform DNA by making single-stranded nicks across the HJ at symmetrical positions within the homologous arms, yielding a 5'-phosphate and a 3'-hydroxyl group; requires a central core of homology in the junction. The consensus cleavage sequence is 5'-(A/T)TT(C/G)-3'. Cleavage occurs on the 3'-side of the TT dinucleotide at the point of strand exchange. HJ branch migration catalyzed by RuvA-RuvB allows RuvC to scan DNA until it finds its consensus sequence, where it cleaves and resolves the cruciform DNA. The chain is Crossover junction endodeoxyribonuclease RuvC from Rickettsia rickettsii (strain Iowa).